Consider the following 316-residue polypeptide: Holliday junction branch migration complex subunit RuvB (316 aa).

Residues 1–165 (MQITRPHNFE…FGYIARFVSY (165 aa)) form a large ATPase domain (RuvB-L) region. Residues arginine 5, glycine 46, lysine 49, threonine 50, serine 51, 112 to 114 (EDF), arginine 155, tyrosine 165, and arginine 202 each bind ATP. Threonine 50 contributes to the Mg(2+) binding site. The tract at residues 166-236 (NAEDMKQIIR…IIKKTFKSLD (71 aa)) is small ATPAse domain (RuvB-S). The tract at residues 239–316 (EYGLTKDHVE…TYLLKEKLIW (78 aa)) is head domain (RuvB-H). Residues lysine 294 and arginine 299 each contribute to the DNA site.

It belongs to the RuvB family. Homohexamer. Forms an RuvA(8)-RuvB(12)-Holliday junction (HJ) complex. HJ DNA is sandwiched between 2 RuvA tetramers; dsDNA enters through RuvA and exits via RuvB. An RuvB hexamer assembles on each DNA strand where it exits the tetramer. Each RuvB hexamer is contacted by two RuvA subunits (via domain III) on 2 adjacent RuvB subunits; this complex drives branch migration. In the full resolvosome a probable DNA-RuvA(4)-RuvB(12)-RuvC(2) complex forms which resolves the HJ.

Its subcellular location is the cytoplasm. The enzyme catalyses ATP + H2O = ADP + phosphate + H(+). Functionally, the RuvA-RuvB-RuvC complex processes Holliday junction (HJ) DNA during genetic recombination and DNA repair, while the RuvA-RuvB complex plays an important role in the rescue of blocked DNA replication forks via replication fork reversal (RFR). RuvA specifically binds to HJ cruciform DNA, conferring on it an open structure. The RuvB hexamer acts as an ATP-dependent pump, pulling dsDNA into and through the RuvAB complex. RuvB forms 2 homohexamers on either side of HJ DNA bound by 1 or 2 RuvA tetramers; 4 subunits per hexamer contact DNA at a time. Coordinated motions by a converter formed by DNA-disengaged RuvB subunits stimulates ATP hydrolysis and nucleotide exchange. Immobilization of the converter enables RuvB to convert the ATP-contained energy into a lever motion, pulling 2 nucleotides of DNA out of the RuvA tetramer per ATP hydrolyzed, thus driving DNA branch migration. The RuvB motors rotate together with the DNA substrate, which together with the progressing nucleotide cycle form the mechanistic basis for DNA recombination by continuous HJ branch migration. Branch migration allows RuvC to scan DNA until it finds its consensus sequence, where it cleaves and resolves cruciform DNA. The polypeptide is Holliday junction branch migration complex subunit RuvB (Mycoplasmopsis synoviae (strain 53) (Mycoplasma synoviae)).